The following is a 427-amino-acid chain: UDP-N-acetyl-D-mannosamine dehydrogenase (427 aa).

Residues Tyr-20, Ile-21, Asp-40, Arg-45, Thr-92, and Thr-130 each contribute to the NAD(+) site. Positions 157, 158, 209, 213, 216, 247, 249, and 260 each coordinate UDP-N-acetyl-alpha-D-mannosaminouronate. The Proton donor/acceptor role is filled by Lys-209. Cys-263 (nucleophile) is an active-site residue. Positions 317 and 318 each coordinate UDP-N-acetyl-alpha-D-mannosaminouronate. Arg-325 serves as a coordination point for NAD(+). Lys-403 provides a ligand contact to UDP-N-acetyl-alpha-D-mannosaminouronate.

The protein belongs to the UDP-glucose/GDP-mannose dehydrogenase family. In terms of assembly, homotetramer; probably dimer of dimers.

It carries out the reaction UDP-N-acetyl-alpha-D-mannosamine + 2 NAD(+) + H2O = UDP-N-acetyl-alpha-D-mannosaminouronate + 2 NADH + 3 H(+). In terms of biological role, catalyzes the four-electron oxidation of UDP-N-acetyl-D-mannosamine (UDP-ManNAc), reducing NAD(+) and releasing UDP-N-acetylmannosaminuronic acid (UDP-ManNAcA). In Methanocaldococcus jannaschii (strain ATCC 43067 / DSM 2661 / JAL-1 / JCM 10045 / NBRC 100440) (Methanococcus jannaschii), this protein is UDP-N-acetyl-D-mannosamine dehydrogenase (wecC).